The primary structure comprises 1846 residues: MILDKFKNIVNLSNSNTEKEEGKNAEINENNDPNTQLAHEPSIVEADEKTFFDEMLGAPQYTYDEFLQVLKNPIEERGDTEDMKKHWGYPRRWKVILWDLHIQNYMNNDFNAFVDFDFGGNREECRIQRGSTMKIYAKGKTKNCLRTPVVTNVATEQKKNMNFRNVFEYRGSYLDLENEKLRIRVWEYKQFTLNKLEGIYEEPLLSFAVGEIYNETTLYKFIKDSRVKRCRLYFQLYFQELYDFELSFLNWSFSDLLSSSYIQAKSYNYLSNKNNVKKRYIDDTSCNIFPHMCKNFKRFHKKKIYRKVRNYDIDKNFSFNTALSDDSDERKNKNDRTIKNLEKLFVRNLTLMQNIEENEDMSYKNLQNINLPNPRVTITLSHTPKGHEGLNIISIEQKSIRFPIWENLGEIYFRGTLRDLDVSYLNIKVEDMSAPKSAREIGTCQISLKGIVDYPYVMHELEAPSWLVKEAKYEGWENKLNEWKLGTVEGKVIINRVPRYRQRGDIYHIDSKQPYLIVHIFNIDKIITVDNIKELDTYVEVSFDETSRRTRLMKKTLSPNYDSQISIPLRFNNKNDINYENLSKKGLIYIDVWGKSEDIVYIGGISISPYEIFFNEKNVRRNKTKLEHIDLETNVKITYDTVVYRGCKKLCFLHDDQRMSNIHFSIWTYPDILGNSTNQKKIVAPVSFNTTMNFPIKLAEKYNKLKKLFMEVLKTIKSIPENCTDVNTSTRFYNYELINQRKEKHFLPTLITSIKSPYCAESMNAIFHYVRCIPFIHKKENIIFTPDFTLQLKGGNALDHSLLLCSLFLGIPVLAFVCFGTLWDKQKHSWVATFEYNDEKNYGIVKFWETTTGNVYILKKRFIDHNRLKGLELKLKESKYKSHLRNGFLQRYENNTDINYIKEQTKRHIKQLFKNRINDIPIGGPSLPYKTIDLIFNHKNIYVNLQHSSPLNIWYDYWKFDFWFPFSSIEYNLQPSFTIKSFTHKMEDMELDKIAKELRTNIEKNINIYRASRNLSTRWNRDETLEIFLQVGLELLHQLNTSRKEDVLLAKLKIEDWKKALYHKVPQSHRLLGFPYHFNTYKSKFISDKLISTLAILESRDRSLCLSLAVCLYSLPGNFISCYIYIITCVKITQRELRKMEIIKEKAQRMAEIKNSQKKKKSSDDQNIDIKTMDDVEEKETFSSTNLDDTLHDEHTDIDTEKKKHEKDNYKNKKIKNTKLKDANIDNEEKDDHHHITDKKVSKSSDLIHSFDKNDISKNTFDKEEFINNLDKDKKYSSFKKGNVVNKKVSIKNEPSINIYEDHKIYDDENISNNIDNMENNQDEIYNLRQGKTIINEFQQVKKPQKYTINEKRDDIKTKKKRSKEKKKQDKLEFEKLIQSNAYFEQEKKKLQEDIKKLEKDKEQFQKEKIRREEKEKQLLLEEKIKLQKEKELFENEKLERKMSYMLKINELEKKKNERNKMEKSYKRMIQKDKEKKKKKESRDKIRRGEEEKMSADENMKEEQKMREEQKVGEEQKVGEEQKVGEEQKLREEQKMREEQKMREEQKMREEQKMREEQKVREEQKMREEQKMREEQKMREEQKVREEQKLREEQKMREEQKMREEQKMREEEKIREEEQMKREKKMRREEKKKRVQEPIKIDEIQVYDIIKNEKMKKKEEKEEKKRKKKKEDIEDKYKIGKEASLDENNNERQIKSKNIQEISDYEYKNIKENKNLNKFDEKLDLNQIYSKASNFYDNQEKKRRTIKVHANRKENSDSTFSHIDDSIKNKKEYLEDSNIARYLYEKRKHDLIGKGNYNFDEPHYGKKMNNVAYQDIKGSNLFKGFIEEPSSKKSPQKKKIVIVRKN.

Positions 16-36 (NTEKEEGKNAEINENNDPNTQ) are disordered. Basic and acidic residues predominate over residues 17 to 26 (TEKEEGKNAE). Residues 27–36 (INENNDPNTQ) are compositionally biased toward polar residues. One can recognise a C2 domain in the interval 497–623 (VPRYRQRGDI…FNEKNVRRNK (127 aa)). Composition is skewed to basic and acidic residues over residues 1193–1211 (DEHT…DNYK) and 1230–1243 (KDDH…KVSK). Disordered regions lie at residues 1193 to 1244 (DEHT…VSKS), 1346 to 1370 (KYTI…KKQD), 1456 to 1635 (KNER…KKRV), 1652 to 1692 (NEKM…NNER), and 1827 to 1846 (EEPS…VRKN). Residues 1349-1506 (INEKRDDIKT…DENMKEEQKM (158 aa)) are a coiled coil. Basic and acidic residues-rich tracts occupy residues 1456–1474 (KNER…QKDK), 1481–1629 (ESRD…MRRE), 1652–1663 (NEKMKKKEEKEE), and 1670–1692 (KEDI…NNER). Positions 1834–1846 (SPQKKKIVIVRKN) are enriched in basic residues.

It localises to the membrane. Functionally, binds calcium and phospholipids. Regulates microneme secretion. The polypeptide is C2 domain-containing protein (Plasmodium falciparum (isolate 3D7)).